The primary structure comprises 91 residues: Hepcidin-1 (91 aa).

The signal sequence occupies residues Met-1–Ala-24. Positions Val-25 to Thr-64 are excised as a propeptide. Cystine bridges form between Cys-73/Cys-89, Cys-76/Cys-79, Cys-77/Cys-85, and Cys-80/Cys-88.

The protein belongs to the hepcidin family.

Its subcellular location is the secreted. Functionally, seems to act as a signaling molecule involved in the maintenance of iron homeostasis. Seems to be required in conjunction with HFE to regulate both intestinal iron absorption and iron storage in macrophages. May also have antimicrobial activity. This Danio rerio (Zebrafish) protein is Hepcidin-1 (hamp1).